Reading from the N-terminus, the 333-residue chain is Nucleoid-associated protein HAPS_0704 (333 aa).

The protein belongs to the YejK family.

Its subcellular location is the cytoplasm. The protein resides in the nucleoid. In Glaesserella parasuis serovar 5 (strain SH0165) (Haemophilus parasuis), this protein is Nucleoid-associated protein HAPS_0704.